A 226-amino-acid chain; its full sequence is Clarin-3 (226 aa).

The chain crosses the membrane as a helical span at residues 8-28 (LMFLSSFFTSLGSFIVICSIL). An N-linked (GlcNAc...) asparagine glycan is attached at asparagine 83. 3 helical membrane passes run 92–112 (VTILFLVLSLITSLLSSGFTF), 129–149 (VYTWNGLGASFVFVTMILFVA), and 181–201 (FWLILLVILLNIVTVTIIIFY).

This sequence belongs to the clarin family.

Its subcellular location is the membrane. In Homo sapiens (Human), this protein is Clarin-3 (CLRN3).